Consider the following 252-residue polypeptide: Indole-3-glycerol phosphate synthase (252 aa).

It belongs to the TrpC family.

It carries out the reaction 1-(2-carboxyphenylamino)-1-deoxy-D-ribulose 5-phosphate + H(+) = (1S,2R)-1-C-(indol-3-yl)glycerol 3-phosphate + CO2 + H2O. The protein operates within amino-acid biosynthesis; L-tryptophan biosynthesis; L-tryptophan from chorismate: step 4/5. The sequence is that of Indole-3-glycerol phosphate synthase from Listeria monocytogenes serovar 1/2a (strain ATCC BAA-679 / EGD-e).